We begin with the raw amino-acid sequence, 360 residues long: Peptide chain release factor 1 (360 aa).

Glutamine 236 is modified (N5-methylglutamine).

Belongs to the prokaryotic/mitochondrial release factor family. In terms of processing, methylated by PrmC. Methylation increases the termination efficiency of RF1.

It is found in the cytoplasm. Peptide chain release factor 1 directs the termination of translation in response to the peptide chain termination codons UAG and UAA. This is Peptide chain release factor 1 from Methylococcus capsulatus (strain ATCC 33009 / NCIMB 11132 / Bath).